Here is a 549-residue protein sequence, read N- to C-terminus: MSRRQTWSLLLIAFGLFYLVPLSNHGLWIPDETRYAQISQAMLLGGDWVSPHFLGLRYFEKPVAGYWMIALGQAVFGENLFGVRIASVVATALSVLLAYLLARRLWRDPRTSLACALLYASFGLIAGQSGYANLDPQFTFWVNLSLVALWYALDAGSRRARLLGWILLGLACGMGFLTKGFLAWLLPVLVALPYMLWQRRWRELLGYGALAVLAALLVCLPWALAVHAREADYWRFFFWHEHIRRFAGEDAQHSRPWWFYLPLLVVACLPWSGLLPSALRQAWHERRQAPVVFLALWLLLPLAFFSLSRGKLPTYIMPCLLPLALLMGHALVQRLRLGNSVALRGNGLLNLGLALLALAALAYLQLRKPVYQEEPFELFLVLLVIGAWAAAGLAQWRYPLRAWAAPLLASWVLIALLPAAMPNHVVQNKTPDLFVAEHLDELTGARHLLSNDLGAASALAWRLRRSDVTLYDTRGELKYGLSYPEHSQRSVPLADIRQWLWRARQDGSVAVLLRINSASDRYQLALLPGDGERYRNGNLVLAILPQVRP.

12 helical membrane passes run 9–29, 80–100, 112–132, 136–156, 166–186, 204–224, 256–276, 288–308, 312–332, 346–366, 376–396, and 402–422; these read LLLIAFGLFYLVPLSNHGLWI, LFGVRIASVVATALSVLLAYL, SLACALLYASFGLIAGQSGYA, PQFTFWVNLSLVALWYALDAG, ILLGLACGMGFLTKGFLAWLL, LLGYGALAVLAALLVCLPWAL, PWWFYLPLLVVACLPWSGLLP, QAPVVFLALWLLLPLAFFSLS, LPTYIMPCLLPLALLMGHALV, NGLLNLGLALLALAALAYLQL, FELFLVLLVIGAWAAAGLAQW, and AWAAPLLASWVLIALLPAAMP.

The protein belongs to the glycosyltransferase 83 family.

The protein resides in the cell inner membrane. It carries out the reaction 4-amino-4-deoxy-alpha-L-arabinopyranosyl di-trans,octa-cis-undecaprenyl phosphate + lipid IVA = lipid IIA + di-trans,octa-cis-undecaprenyl phosphate.. It functions in the pathway lipopolysaccharide metabolism; 4-amino-4-deoxy-beta-L-arabinose-lipid A biosynthesis. Catalyzes the transfer of the L-Ara4N moiety of the glycolipid undecaprenyl phosphate-alpha-L-Ara4N to lipid A. The modified arabinose is attached to lipid A and is required for resistance to polymyxin and cationic antimicrobial peptides. In Pseudomonas aeruginosa (strain UCBPP-PA14), this protein is Undecaprenyl phosphate-alpha-4-amino-4-deoxy-L-arabinose arabinosyl transferase.